We begin with the raw amino-acid sequence, 224 residues long: Ribonuclease 3 (224 aa).

One can recognise an RNase III domain in the interval 5 to 127; it reads ANRLQRRLGY…IIGAIYLDSD (123 aa). E40 contacts Mg(2+). D44 is an active-site residue. Positions 113 and 116 each coordinate Mg(2+). Residue E116 is part of the active site. Positions 154–224 constitute a DRBM domain; that stretch reads DPKTRLQECL…AELALKQLES (71 aa).

The protein belongs to the ribonuclease III family. As to quaternary structure, homodimer. Requires Mg(2+) as cofactor.

It is found in the cytoplasm. It catalyses the reaction Endonucleolytic cleavage to 5'-phosphomonoester.. Digests double-stranded RNA. Involved in the processing of primary rRNA transcript to yield the immediate precursors to the large and small rRNAs (23S and 16S). Processes some mRNAs, and tRNAs when they are encoded in the rRNA operon. Processes pre-crRNA and tracrRNA of type II CRISPR loci if present in the organism. The protein is Ribonuclease 3 of Photobacterium profundum (strain SS9).